Consider the following 67-residue polypeptide: Large ribosomal subunit protein uL29 (67 aa).

Belongs to the universal ribosomal protein uL29 family.

The polypeptide is Large ribosomal subunit protein uL29 (Alkaliphilus oremlandii (strain OhILAs) (Clostridium oremlandii (strain OhILAs))).